An 80-amino-acid polypeptide reads, in one-letter code: Small ribosomal subunit protein bS18 (80 aa).

It belongs to the bacterial ribosomal protein bS18 family. In terms of assembly, part of the 30S ribosomal subunit. Forms a tight heterodimer with protein bS6.

Functionally, binds as a heterodimer with protein bS6 to the central domain of the 16S rRNA, where it helps stabilize the platform of the 30S subunit. The sequence is that of Small ribosomal subunit protein bS18 from Methylocella silvestris (strain DSM 15510 / CIP 108128 / LMG 27833 / NCIMB 13906 / BL2).